We begin with the raw amino-acid sequence, 387 residues long: S-adenosylmethionine synthase (387 aa).

An ATP-binding site is contributed by histidine 16. Position 18 (aspartate 18) interacts with Mg(2+). Glutamate 44 provides a ligand contact to K(+). 2 residues coordinate L-methionine: glutamate 57 and glutamine 100. Residues 100 to 110 form a flexible loop region; sequence QSPDIAQGVDR. ATP is bound by residues 167–169, 232–233, aspartate 241, 247–248, alanine 264, and lysine 268; these read DAK, RF, and RK. Position 241 (aspartate 241) interacts with L-methionine. Lysine 272 provides a ligand contact to L-methionine.

Belongs to the AdoMet synthase family. In terms of assembly, homotetramer; dimer of dimers. Mg(2+) is required as a cofactor. K(+) serves as cofactor.

Its subcellular location is the cytoplasm. The catalysed reaction is L-methionine + ATP + H2O = S-adenosyl-L-methionine + phosphate + diphosphate. It functions in the pathway amino-acid biosynthesis; S-adenosyl-L-methionine biosynthesis; S-adenosyl-L-methionine from L-methionine: step 1/1. Functionally, catalyzes the formation of S-adenosylmethionine (AdoMet) from methionine and ATP. The overall synthetic reaction is composed of two sequential steps, AdoMet formation and the subsequent tripolyphosphate hydrolysis which occurs prior to release of AdoMet from the enzyme. The sequence is that of S-adenosylmethionine synthase from Cupriavidus pinatubonensis (strain JMP 134 / LMG 1197) (Cupriavidus necator (strain JMP 134)).